A 403-amino-acid chain; its full sequence is Alkaline protease 1 (403 aa).

A signal peptide spans 1–21 (MLSIKRTLLLLGAVLPAVFGA). Residues 22–125 (PVQETRRAAQ…QIWYLDALTT (104 aa)) constitute a propeptide that is removed on maturation. In terms of domain architecture, Inhibitor I9 spans 36-120 (KYIVTFKPGT…HVEEDQIWYL (85 aa)). One can recognise a Peptidase S8 domain in the interval 130–403 (PWGLGSISHK…PNKLAYNGNA (274 aa)). Catalysis depends on charge relay system residues D162 and H193. Residues N253 and N307 are each glycosylated (N-linked (GlcNAc...) asparagine). S349 functions as the Charge relay system in the catalytic mechanism. N367 carries N-linked (GlcNAc...) asparagine glycosylation.

The protein belongs to the peptidase S8 family.

Its subcellular location is the secreted. It catalyses the reaction Hydrolysis of proteins with broad specificity, and of Bz-Arg-OEt &gt; Ac-Tyr-OEt. Does not hydrolyze peptide amides.. Functionally, secreted alkaline protease that allows assimilation of proteinaceous substrates. Acts as a significant virulence factor in invasive aspergillosis. Involved in immune evasion from the human and mice complement systems during infection. Efficiently cleaves important components of the complement cascade such as such as C3, C4, C5, and C1q, as well as IgG, which leads to down-regulation of complement activation at the hyphal surface. The protein is Alkaline protease 1 (alp1) of Aspergillus fumigatus (strain CBS 144.89 / FGSC A1163 / CEA10) (Neosartorya fumigata).